The following is a 92-amino-acid chain: MARTVNCVYLNKEAEGLGFQLYPGDLGKRIFDNVSKEAWALWQSKQTMLINEKKLNMMNVDDRKFLEEQMVNFLFEGKDVEIEGYVPQKDDE.

It belongs to the Fe(2+)-trafficking protein family.

Functionally, could be a mediator in iron transactions between iron acquisition and iron-requiring processes, such as synthesis and/or repair of Fe-S clusters in biosynthetic enzymes. This Shewanella halifaxensis (strain HAW-EB4) protein is Probable Fe(2+)-trafficking protein.